Here is a 122-residue protein sequence, read N- to C-terminus: Large ribosomal subunit protein uL14 (122 aa).

Belongs to the universal ribosomal protein uL14 family. Part of the 50S ribosomal subunit. Forms a cluster with proteins L3 and L19. In the 70S ribosome, L14 and L19 interact and together make contacts with the 16S rRNA in bridges B5 and B8.

In terms of biological role, binds to 23S rRNA. Forms part of two intersubunit bridges in the 70S ribosome. In Stutzerimonas stutzeri (strain A1501) (Pseudomonas stutzeri), this protein is Large ribosomal subunit protein uL14.